Consider the following 246-residue polypeptide: Small ribosomal subunit protein uS2 (246 aa).

The protein belongs to the universal ribosomal protein uS2 family.

The protein is Small ribosomal subunit protein uS2 of Burkholderia pseudomallei (strain 668).